The chain runs to 448 residues: N-succinylarginine dihydrolase (448 aa).

Substrate-binding positions include 19 to 28, Asn-110, and 137 to 138; these read GGLSYGNVAS and HR. Residue Glu-174 is part of the active site. Arg-214 contacts substrate. His-250 is an active-site residue. Substrate is bound by residues Asp-252 and Asn-365. Residue Cys-371 is the Nucleophile of the active site.

It belongs to the succinylarginine dihydrolase family. As to quaternary structure, homodimer.

It catalyses the reaction N(2)-succinyl-L-arginine + 2 H2O + 2 H(+) = N(2)-succinyl-L-ornithine + 2 NH4(+) + CO2. It functions in the pathway amino-acid degradation; L-arginine degradation via AST pathway; L-glutamate and succinate from L-arginine: step 2/5. In terms of biological role, catalyzes the hydrolysis of N(2)-succinylarginine into N(2)-succinylornithine, ammonia and CO(2). This chain is N-succinylarginine dihydrolase, found in Pseudomonas fluorescens (strain ATCC BAA-477 / NRRL B-23932 / Pf-5).